The chain runs to 409 residues: LL-diaminopimelate aminotransferase (409 aa).

Residues Y15 and G42 each coordinate substrate. Residues Y72, 108–109 (AK), Y132, N186, Y217, and 245–247 (SFS) each bind pyridoxal 5'-phosphate. Substrate is bound by residues K109, Y132, and N186. N6-(pyridoxal phosphate)lysine is present on K248. Residues R256 and N291 each contribute to the pyridoxal 5'-phosphate site. Substrate-binding residues include N291 and R387.

Belongs to the class-I pyridoxal-phosphate-dependent aminotransferase family. LL-diaminopimelate aminotransferase subfamily. In terms of assembly, homodimer. Pyridoxal 5'-phosphate is required as a cofactor.

It carries out the reaction (2S,6S)-2,6-diaminopimelate + 2-oxoglutarate = (S)-2,3,4,5-tetrahydrodipicolinate + L-glutamate + H2O + H(+). Its pathway is amino-acid biosynthesis; L-lysine biosynthesis via DAP pathway; LL-2,6-diaminopimelate from (S)-tetrahydrodipicolinate (aminotransferase route): step 1/1. Its function is as follows. Involved in the synthesis of meso-diaminopimelate (m-DAP or DL-DAP), required for both lysine and peptidoglycan biosynthesis. Catalyzes the direct conversion of tetrahydrodipicolinate to LL-diaminopimelate. This is LL-diaminopimelate aminotransferase from Parabacteroides distasonis (strain ATCC 8503 / DSM 20701 / CIP 104284 / JCM 5825 / NCTC 11152).